Reading from the N-terminus, the 348-residue chain is Protein RecA (348 aa).

66-73 is an ATP binding site; it reads GPESSGKT.

It belongs to the RecA family.

It is found in the cytoplasm. Functionally, can catalyze the hydrolysis of ATP in the presence of single-stranded DNA, the ATP-dependent uptake of single-stranded DNA by duplex DNA, and the ATP-dependent hybridization of homologous single-stranded DNAs. It interacts with LexA causing its activation and leading to its autocatalytic cleavage. The protein is Protein RecA of Neisseria meningitidis serogroup B (strain ATCC BAA-335 / MC58).